The sequence spans 884 residues: Formin-like protein 11 (884 aa).

Residues 1-18 (MVYFRQIFLMIIVVSLHC) form the signal peptide. A disordered region spans residues 89–143 (AESASFSPWPAPSPSPFPNGGPIESPAYPPAPPRPIPPHLRRPLPQRTHPLEQPE). 2 stretches are compositionally biased toward pro residues: residues 97-107 (WPAPSPSPFPN) and 115-126 (AYPPAPPRPIPP). Residues 158-178 (ILVPVVASTASAIGFVVCVVG) traverse the membrane as a helical segment. Disordered stretches follow at residues 307–384 (SSDD…FSNK), 416–469 (SFPI…APLP), and 512–532 (MQSS…GKHL). Low complexity predominate over residues 329–343 (SNASSASGSVNVGSS). Residues 346–358 (FSEHKLDIPECSR) show a composition bias toward basic and acidic residues. Composition is skewed to pro residues over residues 367-379 (APPP…PPLP) and 425-436 (QPRPPPPPPPPQ). The FH2 domain maps to 461–884 (LGKDGAPLPK…NSPSPLAPFR (424 aa)).

This sequence belongs to the formin-like family. Class-I subfamily.

The protein localises to the membrane. In terms of biological role, might be involved in the organization and polarity of the actin cytoskeleton. This is Formin-like protein 11 (FH11) from Arabidopsis thaliana (Mouse-ear cress).